The following is a 177-amino-acid chain: Large ribosomal subunit protein uL6 (177 aa).

Belongs to the universal ribosomal protein uL6 family. As to quaternary structure, part of the 50S ribosomal subunit.

In terms of biological role, this protein binds to the 23S rRNA, and is important in its secondary structure. It is located near the subunit interface in the base of the L7/L12 stalk, and near the tRNA binding site of the peptidyltransferase center. This is Large ribosomal subunit protein uL6 from Idiomarina loihiensis (strain ATCC BAA-735 / DSM 15497 / L2-TR).